We begin with the raw amino-acid sequence, 510 residues long: tRNA-2-methylthio-N(6)-dimethylallyladenosine synthase (510 aa).

Residues 19–135 (RTFEVRTYGC…LPALLDRARH (117 aa)) form the MTTase N-terminal domain. Positions 28, 64, 98, 172, 176, and 179 each coordinate [4Fe-4S] cluster. In terms of domain architecture, Radical SAM core spans 158 to 394 (RESSYAAWVS…IELQERISLE (237 aa)). The TRAM domain maps to 397–467 (TAQIGRRVEL…PHHLIADAGL (71 aa)). The tract at residues 477–510 (DAHAAGQKPRTGVGLGMPAVGAPDPLPATTGCAR) is disordered.

It belongs to the methylthiotransferase family. MiaB subfamily. As to quaternary structure, monomer. [4Fe-4S] cluster serves as cofactor.

It localises to the cytoplasm. It catalyses the reaction N(6)-dimethylallyladenosine(37) in tRNA + (sulfur carrier)-SH + AH2 + 2 S-adenosyl-L-methionine = 2-methylsulfanyl-N(6)-dimethylallyladenosine(37) in tRNA + (sulfur carrier)-H + 5'-deoxyadenosine + L-methionine + A + S-adenosyl-L-homocysteine + 2 H(+). Its function is as follows. Catalyzes the methylthiolation of N6-(dimethylallyl)adenosine (i(6)A), leading to the formation of 2-methylthio-N6-(dimethylallyl)adenosine (ms(2)i(6)A) at position 37 in tRNAs that read codons beginning with uridine. This chain is tRNA-2-methylthio-N(6)-dimethylallyladenosine synthase, found in Mycolicibacterium vanbaalenii (strain DSM 7251 / JCM 13017 / BCRC 16820 / KCTC 9966 / NRRL B-24157 / PYR-1) (Mycobacterium vanbaalenii).